Reading from the N-terminus, the 409-residue chain is Nucleoprotein (409 aa).

4 disordered regions span residues 1 to 32, 47 to 84, 121 to 145, and 164 to 194; these read MASG…SSGN, PQPK…KSGR, ADTK…LRFS, and RSGR…GAED. Residues 29 to 160 form an RNA-binding region; that stretch reads SSGNASWFQA…GNFRWDFIPL (132 aa). Residues 31 to 156 enclose the CoV N NTD domain; the sequence is GNASWFQAIK…GGPDGNFRWD (126 aa). A compositionally biased stretch (polar residues) spans 57-68; it reads PDNNNIKPSQQH. Basic residues predominate over residues 70 to 84; it reads YWRRQARYKPGKSGR. The span at 164 to 179 shows a compositional bias: low complexity; it reads RSGRSTAASSAASSRA. Basic and acidic residues predominate over residues 180–192; it reads PSREGSRGRRSGA. Ser190 is subject to Phosphoserine; by host. The 117-residue stretch at 215–331 folds into the CoV N CTD domain; sequence TKAKADEMAH…QCVDGVGTRP (117 aa). The tract at residues 226–333 is dimerization; the sequence is RYCKRTIPPG…VDGVGTRPKD (108 aa). Cys320 and Cys323 are oxidised to a cystine. Positions 326 to 409 are disordered; the sequence is GVGTRPKDDE…GDSALGENEL (84 aa). A compositionally biased stretch (basic residues) spans 358–367; that stretch reads QRPKKEKKPK. Residues 368-384 are compositionally biased toward basic and acidic residues; it reads KQDDEVDKALTSDEERN. The residue at position 378 (Thr378) is a Phosphothreonine; by host. Ser379 carries the post-translational modification Phosphoserine; by host.

It belongs to the gammacoronavirus nucleocapsid protein family. Homooligomer. Both monomeric and oligomeric forms interact with RNA. Interacts with protein M. Interacts with NSP3; this interaction serves to tether the genome to the newly translated replicase-transcriptase complex at a very early stage of infection. ADP-ribosylated. The ADP-ribosylation is retained in the virion during infection. Post-translationally, phosphorylated on serine and threonine residues.

Its subcellular location is the virion. The protein resides in the host endoplasmic reticulum-Golgi intermediate compartment. It is found in the host Golgi apparatus. Functionally, packages the positive strand viral genome RNA into a helical ribonucleocapsid (RNP) and plays a fundamental role during virion assembly through its interactions with the viral genome and membrane protein M. Plays an important role in enhancing the efficiency of subgenomic viral RNA transcription as well as viral replication. This Gallus gallus (Chicken) protein is Nucleoprotein.